Consider the following 1788-residue polypeptide: U3 small nucleolar RNA-associated protein 10 (1788 aa).

Residues Leu585–Thr622 form an HEAT 1 repeat. The tract at residues Pro884–Asp905 is disordered. HEAT repeat units lie at residues Ala926–Ser962, Gln1049–His1086, Leu1257–Ile1294, Glu1301–Lys1339, Glu1703–Glu1740, and Gln1744–Glu1781.

Belongs to the HEATR1/UTP10 family. In terms of assembly, component of the ribosomal small subunit (SSU) processome.

The protein localises to the nucleus. It localises to the nucleolus. Involved in nucleolar processing of pre-18S ribosomal RNA. Involved in ribosome biosynthesis. The polypeptide is U3 small nucleolar RNA-associated protein 10 (rbg-5) (Neurospora crassa (strain ATCC 24698 / 74-OR23-1A / CBS 708.71 / DSM 1257 / FGSC 987)).